An 89-amino-acid chain; its full sequence is Small ribosomal subunit protein uS15 (89 aa).

Belongs to the universal ribosomal protein uS15 family. Part of the 30S ribosomal subunit. Forms a bridge to the 50S subunit in the 70S ribosome, contacting the 23S rRNA.

Functionally, one of the primary rRNA binding proteins, it binds directly to 16S rRNA where it helps nucleate assembly of the platform of the 30S subunit by binding and bridging several RNA helices of the 16S rRNA. Its function is as follows. Forms an intersubunit bridge (bridge B4) with the 23S rRNA of the 50S subunit in the ribosome. The polypeptide is Small ribosomal subunit protein uS15 (Lactobacillus delbrueckii subsp. bulgaricus (strain ATCC 11842 / DSM 20081 / BCRC 10696 / JCM 1002 / NBRC 13953 / NCIMB 11778 / NCTC 12712 / WDCM 00102 / Lb 14)).